The following is a 365-amino-acid chain: 25S rRNA (uridine(2843)-N(3))-methyltransferase (365 aa).

This sequence belongs to the class I-like SAM-binding methyltransferase superfamily.

It is found in the cytoplasm. Its subcellular location is the nucleus. It catalyses the reaction uridine(2843) in 25S rRNA + S-adenosyl-L-methionine = N(3)-methyluridine(2843) in 25S rRNA + S-adenosyl-L-homocysteine + H(+). Functionally, S-adenosyl-L-methionine-dependent methyltransferase that specifically methylates the N(3) position of uridine 2843 (m3U2843) in 25S rRNA. This Saccharomyces cerevisiae (strain ATCC 204508 / S288c) (Baker's yeast) protein is 25S rRNA (uridine(2843)-N(3))-methyltransferase (BMT6).